A 155-amino-acid chain; its full sequence is FUN14 domain-containing protein 1 (155 aa).

Residues 1 to 47 (MATRNPPPQEYESDDDSYEVLDLTEYARRHHWWNRVFGHSSGPMVEK) lie on the Cytoplasmic side of the membrane. Residues Ser13 and Ser17 each carry the phosphoserine modification. Tyr18 carries the phosphotyrosine; by SRC modification. A YXXL motif is present at residues 18–21 (YEVL). A helical transmembrane segment spans residues 48-68 (YSVATQIVMGGVSGWCAGFLF). The Mitochondrial intermembrane portion of the chain corresponds to 69-74 (QKVGKL). The helical transmembrane segment at 75 to 95 (AATAVGGGFLLLQIASHSGYV) threads the bilayer. Residues 96–133 (QIDWKRVEKDVNKAKRQIKKRANKAAPEINNIIEEATE) are Cytoplasmic-facing. A Glycyl lysine isopeptide (Lys-Gly) (interchain with G-Cter in ubiquitin) cross-link involves residue Lys119. A helical transmembrane segment spans residues 134-154 (FVKQNIVISSGFVGGFLLGLA). Position 155 (Ser155) is a topological domain, mitochondrial intermembrane.

Belongs to the FUN14 family. In terms of assembly, interacts (via YXXL motif) with MAP1 LC3 family proteins MAP1LC3A, MAP1LC3B and GABARAP. Interacts with DNM1L/DPR1. Interacts with GPX4. In terms of processing, phosphorylation at Ser-13 by CK2 and at Tyr-18 by SRC inhibits activation of mitophagy. Following hypoxia, dephosphorylated at Tyr-18, leading to interaction with MAP1 LC3 family proteins and triggering mitophagy. Dephosphorylation is mediated by PGAM5. Phosphorylated by ULK1 at Ser-17 which enhances FUNDC1 binding to LC3. Ubiquitinated on Lys-119. Deubiquitinated by USP19; leading to hypoxia-induced DRP1 oligomerization and GTPase activity.

It is found in the mitochondrion outer membrane. Its function is as follows. Integral mitochondrial outer-membrane protein that mediates the formation of mitochondria-associated endoplasmic reticulum membranes (MAMs). In turn, mediates angiogenesis and neoangiogenesis through interference with intracellular Ca(2+) communication and regulation of the vascular endothelial growth factor receptor KDR/VEGFR2 expression at both mRNA and protein levels. Also acts as an activator of hypoxia-induced mitophagy, an important mechanism for mitochondrial quality and homeostasis, by interacting with and recruiting LC3 protein family to mitochondria. Mechanistically, recruits DRP1 at ER-mitochondria contact sites leading to DRP1 oligomerization and GTPase activity to facilitate mitochondrial fission during hypoxia. Additionally, plays a role in hepatic ferroptosis by interacting directly with glutathione peroxidase/GPX4 to facilitate its recruitment into mitochondria through TOM/TIM complex where it is degraded by mitophagy. The polypeptide is FUN14 domain-containing protein 1 (FUNDC1) (Bos taurus (Bovine)).